The sequence spans 279 residues: Ethanolamine utilization protein EutJ (279 aa).

It belongs to the EutJ family.

It participates in amine and polyamine degradation; ethanolamine degradation. In terms of biological role, may protect ethanolamine ammonia-lyase (EAL, eutB-eutC) from inhibition, may function in assembling the bacterial microcompartment and/or in refolding EAL, suggesting it may have chaperone activity. Overexpression of eutJ and eutS in E.coli leads to multiple BMC-like structures; eutS expression alone leads to 1 BMC-like structure per cell. Functionally, expression of the eut operon allows this bacteria to use ethanolamine (EA) as a carbon, nitrogen and energy source. It relies on cobalamin (vitamin B12) both as a cofactor for the ethanolamine ammonia-lyase (EAL) activity and to induce the operon. EA enhances bacterial survival in macrophages in a concentration-dependent manner, suggesting it is an important nutrient during infection. The sequence is that of Ethanolamine utilization protein EutJ from Salmonella typhimurium (strain LT2 / SGSC1412 / ATCC 700720).